Consider the following 233-residue polypeptide: UPF0758 protein SRU_2338 (233 aa).

Residues 110–232 enclose the MPN domain; sequence QVTCPADVAD…HTSLAERGVI (123 aa). The Zn(2+) site is built by His181, His183, and Asp194. Positions 181–194 match the JAMM motif motif; it reads HNHPSGNPEPSRED.

The protein belongs to the UPF0758 family.

This chain is UPF0758 protein SRU_2338, found in Salinibacter ruber (strain DSM 13855 / M31).